Reading from the N-terminus, the 210-residue chain is 3-oxo-tetronate 4-phosphate decarboxylase (210 aa).

Glutamate 74 acts as the Proton acceptor in catalysis. Residues glutamate 74, histidine 93, and histidine 95 each coordinate Zn(2+). Tyrosine 120 serves as the catalytic Proton donor. Position 160 (histidine 160) interacts with Zn(2+).

Belongs to the aldolase class II family. AraD/FucA subfamily. It depends on Zn(2+) as a cofactor.

It carries out the reaction 3-dehydro-4-O-phospho-D-erythronate + H(+) = dihydroxyacetone phosphate + CO2. The enzyme catalyses 3-dehydro-4-O-phospho-L-erythronate + H(+) = dihydroxyacetone phosphate + CO2. Catalyzes the decarboxylation of 3-oxo-tetronate 4-phosphate to dihydroxyacetone phosphate (DHAP) and CO(2). The protein is 3-oxo-tetronate 4-phosphate decarboxylase of Haemophilus influenzae (strain ATCC 51907 / DSM 11121 / KW20 / Rd).